Reading from the N-terminus, the 476-residue chain is Probable protein S-acyltransferase 5 (476 aa).

Residues 1–11 show a composition bias toward basic and acidic residues; the sequence is MLDLQPSDRRH. The segment at 1-21 is disordered; the sequence is MLDLQPSDRRHGAPSSSGGVS. A run of 2 helical transmembrane segments spans residues 53–73 and 85–105; these read SILI…IFVG and GVSV…FLLL. The tract at residues 119–138 is disordered; sequence YPPEPESNEGNGEPRLAHTP. A DHHC domain is found at 158 to 208; the sequence is KYCDTCMLYRPPRASHCSICNNCVEKFDHHCPWLGQCIGLRNYRFYFMFVL. Catalysis depends on Cys-188, which acts as the S-palmitoyl cysteine intermediate. The next 2 helical transmembrane spans lie at 209 to 223 and 246 to 266; these read CSTL…FCWI and SIAL…LTCF. 2 disordered regions span residues 320 to 340 and 373 to 454; these read SKEP…PSLQ and VASR…ASRD. Position 336 is a phosphoserine (Ser-336). Residues 387 to 412 show a composition bias toward basic and acidic residues; the sequence is SEGRGIMHSRESSRGRGIMHSRESSR. A Phosphoserine modification is found at Ser-418. Over residues 425–441 the composition is skewed to basic and acidic residues; that stretch reads VNEDLRTRDESVSRVGE.

It belongs to the DHHC palmitoyltransferase family.

Its subcellular location is the cell membrane. It catalyses the reaction L-cysteinyl-[protein] + hexadecanoyl-CoA = S-hexadecanoyl-L-cysteinyl-[protein] + CoA. In terms of biological role, palmitoyl acyltransferase. The protein is Probable protein S-acyltransferase 5 (PAT05) of Arabidopsis thaliana (Mouse-ear cress).